A 497-amino-acid polypeptide reads, in one-letter code: MSNQHIEELNDQQIVRREKMMALAEQGIDPFGKRFGRTANSAELKENYADKTKEELHELNETAIVAGRLMTKRGKGKVGFAHLQDREGQIQLYVRKDSVGEDNYEIFKKADLGDFIGVEGEVMRTDMGELSIKATKLTHLSKSLRPLPEKFHGLTDIETIYRKRHLDLISNRESFDRFVTRSKMISEIRRYLDGLDFLEVETPVLHNEAGGAAARPFVTHHNAQNIDMVLRIATELHLKRLIVGGMERVYEIGRIFRNEGMDATHNPEFTSIEVYQAYADYLDIMNLTEGIIQHAAKAVKGDGPIDYQGTEIRINEPFKRVHMVDAIKEVTGVDFWPEMTVEEAIALAKEKQVPLEKHFTSVGHIINAFFEEFVEETLVQPTFVFGHPVEVSPLAKKNPEDTRFTDRFELFIMTKEYANAFTELNDPIDQLSRFEAQAQAKELGDDEATGIDYDFVEALEYGMPPTGGLGIGIDRLCMLLTNTTTIRDVLLFPTMKP.

Mg(2+)-binding residues include Glu-409 and Glu-416.

This sequence belongs to the class-II aminoacyl-tRNA synthetase family. Homodimer. Requires Mg(2+) as cofactor.

The protein localises to the cytoplasm. It catalyses the reaction tRNA(Lys) + L-lysine + ATP = L-lysyl-tRNA(Lys) + AMP + diphosphate. The chain is Lysine--tRNA ligase from Streptococcus pyogenes serotype M3 (strain ATCC BAA-595 / MGAS315).